Reading from the N-terminus, the 458-residue chain is Protein U54 (458 aa).

N-linked (GlcNAc...) asparagine; by host glycosylation is found at Asn-76, Asn-102, Asn-281, Asn-321, Asn-346, Asn-434, and Asn-451.

It belongs to the herpesviridae UL82 family.

The sequence is that of Protein U54 (U54) from Homo sapiens (Human).